A 106-amino-acid polypeptide reads, in one-letter code: Thiosulfate sulfurtransferase GlpE (106 aa).

The Rhodanese domain maps to Glu-17 to Ala-105. Catalysis depends on Cys-65, which acts as the Cysteine persulfide intermediate.

This sequence belongs to the GlpE family.

The protein resides in the cytoplasm. It carries out the reaction thiosulfate + hydrogen cyanide = thiocyanate + sulfite + 2 H(+). The enzyme catalyses thiosulfate + [thioredoxin]-dithiol = [thioredoxin]-disulfide + hydrogen sulfide + sulfite + 2 H(+). In terms of biological role, transferase that catalyzes the transfer of sulfur from thiosulfate to thiophilic acceptors such as cyanide or dithiols. May function in a CysM-independent thiosulfate assimilation pathway by catalyzing the conversion of thiosulfate to sulfite, which can then be used for L-cysteine biosynthesis. The chain is Thiosulfate sulfurtransferase GlpE from Vibrio atlanticus (strain LGP32) (Vibrio splendidus (strain Mel32)).